The sequence spans 654 residues: Transcription factor E2-alpha (654 aa).

A 9aaTAD motif is present at residues 19-27; the sequence is LLDFSMMFP. The segment at 31–103 is disordered; it reads TNGKGRPASL…LGPGLGGKSG (73 aa). Over residues 55–68 the composition is skewed to low complexity; the sequence is SSGSWGSGDQSSSS. Positions 69 to 79 are enriched in polar residues; it reads FDPSRTFSEGT. A compositionally biased stretch (low complexity) spans 84–94; sequence SHSSLSSSTFL. Residues S134 and S139 each carry the phosphoserine modification. Disordered regions lie at residues 135–205, 239–268, 292–329, and 343–385; these read PGPL…SAKT, MLGGGSSPLPLPPGSGPVGSSGSSSTFGGL, SFSSAPGATYGGVSSHTPPVSGADSLLGSRGTTAGSSG, and DHSS…YDGG. Residues 147–156 show a composition bias toward low complexity; that stretch reads SQYYPSYSGS. Residues 170–176 carry the Nuclear localization signal motif; it reads PKKVRKV. The segment covering 256–268 has biased composition (low complexity); sequence VGSSGSSSTFGGL. The span at 343–354 shows a compositional bias: low complexity; it reads DHSSNNFSSSPS. T355 is subject to Phosphothreonine. Position 359 is a phosphoserine (S359). Omega-N-methylarginine is present on R371. Position 379 is a phosphoserine (S379). The segment at 389–425 is leucine-zipper; the sequence is LQSKIEDHLDEAIHVLRSHAVGTAGDMHTLLPGHGAL. Residues 461–552 form a disordered region; the sequence is NHAALPSQPG…KAEREKERRV (92 aa). A Glycyl lysine isopeptide (Lys-Gly) (interchain with G-Cter in SUMO2) cross-link involves residue K498. Over residues 512–523 the composition is skewed to basic and acidic residues; it reads DHSEEEKKELKA. Phosphoserine is present on S529. The residue at position 531 (D531) is a Phosphothreonine. Residues 542–552 are compositionally biased toward basic and acidic residues; the sequence is QKAEREKERRV. The 54-residue stretch at 549–602 folds into the bHLH domain; sequence ERRVANNARERLRVRDINEAFKELGRMCQLHLNSEKPQTKLLILHQAVSVILNL. A Glycyl lysine isopeptide (Lys-Gly) (interchain with G-Cter in SUMO2) cross-link involves residue K625. The tract at residues 633 to 654 is disordered; the sequence is PQMVLSAPHPGLSEAHNPAGHM.

In terms of assembly, homodimer. Heterodimer; efficient DNA binding requires dimerization with another bHLH protein. Forms a heterodimer with ASH1, TWIST1 and TWIST2. Forms a heterodimer with MYOG; heterodimerization enhances MYOG DNA-binding and transcriptional activities. Forms a heterodimer with NEUROD1; the heterodimer is inhibited in presence of ID2, but not NR0B2, to E-box element. Forms a heterodimer with TCF15; the heterodimer binds E-box element. Forms a heterodimer with ATOH8; repress transcription of TCF3 and TCF3/NEUROG3 dimer-induced transactivation of E box-dependent promoters. Component of a nuclear TAL-1 complex composed at least of CBFA2T3, LDB1, TAL1 and TCF3. Interacts with NEUROD2, PTF1A and TGFB1I1. Interacts with EP300 and UBE2I. Interacts with BHLHA9. Interacts with ASB2; the interaction is mediated by SKP2 and targets TCF3 for Notch-induced proteasomal degradation. Forms a heterodimer with ATOH7; required for ATOH7 DNA-binding. As to quaternary structure, interacts with RALGAPA1 and FIGLA. Post-translationally, phosphorylated following NGF stimulation. In terms of processing, undergoes Notch-induced ubiquitination and subsequent proteasomal degradation which is mediated by ASB1 or ASB2, the substrate-recognition components of probable ECS E3 ubiquitin-protein ligase complexes.

The protein resides in the nucleus. Transcriptional regulator involved in the initiation of neuronal differentiation and mesenchymal to epithelial transition. Heterodimers between TCF3 and tissue-specific basic helix-loop-helix (bHLH) proteins play major roles in determining tissue-specific cell fate during embryogenesis, like muscle or early B-cell differentiation. Together with TCF15, required for the mesenchymal to epithelial transition. Dimers bind DNA on E-box motifs: 5'-CANNTG-3'. Binds to the kappa-E2 site in the kappa immunoglobulin gene enhancer. Binds to IEB1 and IEB2, which are short DNA sequences in the insulin gene transcription control region. Functionally, facilitates ATOH7 binding to DNA at the consensus sequence 5'-CAGGTG-3', and positively regulates transcriptional activity. This Homo sapiens (Human) protein is Transcription factor E2-alpha (TCF3).